The following is a 145-amino-acid chain: Protein AggB (145 aa).

The first 24 residues, 1–24 (MLKKSILPMSCGVLVMVMSGLLDA), serve as a signal peptide directing secretion.

This sequence to E.coli AfaD.

The protein is Protein AggB (aggB) of Escherichia coli.